A 1857-amino-acid chain; its full sequence is MSSLSQQLKSINEKTASVALDRKSRSKIHSKSLIFDPKIASTQDYDYLYQIGLEGLEDLIEIDSRFSKFKQTLFSETTINLDRNVQTQDTLDQLNKNVEVFLSLVSPYYLLTPSTKAVEWLIRRFYINIHNGEMLLLTSLPFYNSPVFVKILNVIPKNQFPKIFEWVVGYKDLLKSPTSSSILKSFHNDAKFFELYSKYLMDQLNNHAVFKEQLVFYLANTVQLVASFTHNLGQFGETYLPVILEVVGKLLLAGSKFSSTLRNDIMLTAYSIISVLSSLVPLSADLVKSFTESILQDPTACDSNTRKQTVIVLGQLWNFYNEDNFEVDCFKNLPASKLVQDDLLKNLIEEGYKINKLLVVYFASNLPQIDAFKIFDFINVDKSETFFKIVTSKLLYYAYNNQDEAIRAKLIEAFESLLRTNKELFVKVLQNYKDGLDISQLEMQLMTTLGDSNIENIHDADIELEDEEEEEEEDQAVLDVDFSDVCNSLENYKTSTTSFLNKSSDEEFTKLFQAFAEKSRSFNIKSQKLILAKFSKAIFVSPEASISFMLRVSFTPSVPLSIRLLVLRFIKLRLKELSLSEDKIDTYLLAPILLLGLYDTNKSVRAGFAELLRVVKDTTSKFHGNKKKVKTSLFMEDQIYGNTEPSKRAIVPPQDGLEMLNVLIEDSKSILDDTVIDKSRLNYVLFQVLFKSQKSGQKKFGQLLLKTFILNQWTLPFWPIVFKYKVWNIISIENNSNGGNDDRFFFIDTDLTDYFSNRDDLIEQAKASKIDFENDVEKAIVGLVGGTSSNDKNVNKEADWLLKALEAPNKLQVAAGKRLSSVFTSFTSIDMRAKLVNKLIELLINDGDDSDNLVVDPVEVLQLLDMDHETIISVLRNVQIVSQIPEQGIVKRRRRSSNSTKQAMARDDISSIAATHLKKLTIVLDLLEFNLRKKTSDIAKPDLLQNLFRILTDLDYLGNDGNLPILYAQETLASCMLLSIVQMKDNSKSNSFKFDSNVVRADLIVNSIRLSQSPQVQNRLLLVIAELAALAPEIILHSVMPIFTFMGAHTVRQDDEFSSSALQQTIAKVIPALAANGSSSLSYEIEFLLTSFVAAFQHIPRHRRVKLFTSLTKTLSYKHSLHIILFLMGQQYSNNITRNKAHESISILEFTSAFLKNFSAQEQLEGVEKFYQLWNQIPNAQLEPNSDEFNALSSRSIFGVSILSLSKSGLLTFKSQLLNFIDKVLDSDTQNDFSNLPSLKLKIALILLDPKKPAEDKSDLLNYFRKVTSFILSSLDTFTNVSRNDVLLDNLYALLGNFLDLLPLNYFIDSIIDSLDCDQISNTLEIKIAKNFAILASRKIENELNANNIDDVIEESILQKLLPVLNKGIKKNLDIELQQAYLNAFSSIVNKFGGSTHLLVTQGNTEALINSLNIITSNSGLLSEQPEIVISSINAITSIVNVLGVKAIGLFPKIVPPSLNIWKTTTASEDESSKLLQASIILLLACLIKKIPVFMTTSLDSIFITILTSDSVDNTVRSSVLQLIVEHMELSQVLKSLCNIWNNKKFYQNDNAGNLGLYLNVLQSTIERMDKKSASSQSTLFMKWLIQAFEFRHYAFDENNKFDNNTIHRLESSFHSCGASYVMKLNDKSFRPLFANLVRWAVSGEGSNATGNTELSRLLAFFKFFSKLQDKLKSIITSYFSYLIDPVSSILNRFANGDIVDINLRRILLNSLTSSFKYDQDDYWSQQSRFDSICSPLLNQLSNIEPNIGKYLVKCVSSFISNVSSEEYNEKLVHGLIEFISNENESTTSNTKIWTIRTLKTIFQKMGEQWLSYLPTLIPYIAELLEDDDEEVELEVRNGLVRVIENVLGEPLDRYLD.

A helical transmembrane segment spans residues 267–287 (LTAYSIISVLSSLVPLSADLV). The HEAT repeat unit spans residues 1817–1855 (LIPYIAELLEDDDEEVELEVRNGLVRVIENVLGEPLDRY).

Belongs to the HEATR1/UTP10 family. As to quaternary structure, component of the ribosomal small subunit (SSU) processome.

Its subcellular location is the nucleus. It localises to the nucleolus. The protein localises to the membrane. In terms of biological role, involved in nucleolar processing of pre-18S ribosomal RNA. Involved in ribosome biosynthesis. This is U3 small nucleolar RNA-associated protein 10 from Debaryomyces hansenii (strain ATCC 36239 / CBS 767 / BCRC 21394 / JCM 1990 / NBRC 0083 / IGC 2968) (Yeast).